Consider the following 467-residue polypeptide: Neurexin-1-beta (467 aa).

The first 45 residues, 1–45 (MYQRMLRCGAELGSPGGGGGGAGGRLALLWIVPLTLSGLLGVAWG), serve as a signal peptide directing secretion. Residues 46–391 (ASSLGAHHIH…EVIRESSSTT (346 aa)) are Extracellular-facing. In terms of domain architecture, Laminin G-like spans 86-284 (YIFSKGGGQI…DANIAIVGNV (199 aa)). Residues aspartate 136 and valine 153 each coordinate Ca(2+). A glycan (N-linked (GlcNAc...) asparagine) is linked at asparagine 183. Residues 200 to 229 (GNNDNERLAIARQRIPYRLGRVVDEWLLDK) form an essential for interaction with CBLN1; modulates interaction affinity with NLGN1, NLGN2 and NLGN3; prevents interaction with DAG1/alpha-dystroglycan; modulates interaction with alpha-latrotoxin region. Residues isoleucine 235 and asparagine 237 each coordinate Ca(2+). Positions 318–380 (LATSTARRGN…AGGREPYPGS (63 aa)) are disordered. A compositionally biased stretch (polar residues) spans 324-339 (RRGNSPTKEPVSQTTD). An O-linked (Xyl...) (heparan sulfate) serine glycan is attached at serine 345. A helical membrane pass occupies residues 392–412 (GMVVGIVAAAALCILILLYAM). Topologically, residues 413-467 (YKYRNRDEGSYHVDESRNYISNSAQSNGAVVKEKQPSSAKSANKNKKNKDKEYYV) are cytoplasmic. Positions 434–467 (NSAQSNGAVVKEKQPSSAKSANKNKKNKDKEYYV) are disordered. A phosphoserine mark is found at serine 449, serine 450, and serine 453.

The protein belongs to the neurexin family. In terms of assembly, the cytoplasmic C-terminal region binds to CASK. Binds NLGN1, NLGN2 and NLGN3, DAG1 (alpha-dystroglycan) and alpha-latrotoxin. Binding to neuroligins is calcium-dependent, and the binding preference ranks as follow: NLGN1 &gt; NLGN4 &gt;&gt; NLGN3 &gt; NLGN2. Interacts with CBLN2 and more weakly with CBLN4. Interacts with CBLN1; interaction is CBLN1 hexamer form-dependent; CBLN1-binding is calcium-independent; isoform 1b does not interact with CBLN1. Interacts with CLSTN3. In terms of processing, O-glycosylated; contains heparan sulfate. Heparan sulfate attachment is required for synapse development by mediating interactions with neuroligins.

It localises to the presynaptic cell membrane. In terms of biological role, neuronal cell surface protein involved in cell recognition and cell adhesion by forming intracellular junctions through binding to neuroligins. Plays a role in formation of synaptic junctions. Functions as part of a trans-synaptic complex by binding to cerebellins and postsynaptic GRID1. This interaction helps regulate the activity of NMDA and AMPA receptors at hippocampal synapses without affecting synapse formation. NRXN1B-CBLN2-GRID1 complex transduce presynaptic signals into postsynaptic NMDAR response. The protein is Neurexin-1-beta of Bos taurus (Bovine).